Consider the following 285-residue polypeptide: Nucleotide-binding protein Pmen_0867 (285 aa).

8–15 (GRSGSGKS) serves as a coordination point for ATP. GTP is bound at residue 60–63 (DARN).

The protein belongs to the RapZ-like family.

Its function is as follows. Displays ATPase and GTPase activities. The polypeptide is Nucleotide-binding protein Pmen_0867 (Ectopseudomonas mendocina (strain ymp) (Pseudomonas mendocina)).